Consider the following 1018-residue polypeptide: Importin-9 (1018 aa).

One can recognise an Importin N-terminal domain in the interval 35–114; sequence TEKRIKQLEY…RNILPNGLYD (80 aa). The tract at residues 921–950 is disordered; it reads GKSDEPLTDSEEDGDDEDAPGNPDKPRYIS. A compositionally biased stretch (acidic residues) spans 926-939; the sequence is PLTDSEEDGDDEDA.

The protein belongs to the importin beta family.

It is found in the cytoplasm. The protein resides in the nucleus. Functionally, nuclear transport receptor that mediates nuclear import of proteins. Serves as receptor for nuclear localization signals (NLS) in cargo substrates. Is thought to mediate docking of the importin/substrate complex to the nuclear pore complex (NPC) through binding to nucleoporin and the complex is subsequently translocated through the pore by an energy requiring, Ran-dependent mechanism. Mediates the import of pre-assembled proteasomes into the nucleus during the late stages of sperm development. This is Importin-9 from Drosophila melanogaster (Fruit fly).